Here is a 319-residue protein sequence, read N- to C-terminus: Aspartate carbamoyltransferase catalytic subunit (319 aa).

The carbamoyl phosphate site is built by R57 and T58. Residue K85 participates in L-aspartate binding. 3 residues coordinate carbamoyl phosphate: R107, H140, and Q143. The L-aspartate site is built by R173 and R227. Carbamoyl phosphate is bound by residues G268 and P269.

Belongs to the aspartate/ornithine carbamoyltransferase superfamily. ATCase family. In terms of assembly, heterododecamer (2C3:3R2) of six catalytic PyrB chains organized as two trimers (C3), and six regulatory PyrI chains organized as three dimers (R2).

It carries out the reaction carbamoyl phosphate + L-aspartate = N-carbamoyl-L-aspartate + phosphate + H(+). The protein operates within pyrimidine metabolism; UMP biosynthesis via de novo pathway; (S)-dihydroorotate from bicarbonate: step 2/3. In terms of biological role, catalyzes the condensation of carbamoyl phosphate and aspartate to form carbamoyl aspartate and inorganic phosphate, the committed step in the de novo pyrimidine nucleotide biosynthesis pathway. This Mycobacterium tuberculosis (strain ATCC 25177 / H37Ra) protein is Aspartate carbamoyltransferase catalytic subunit.